Reading from the N-terminus, the 394-residue chain is Acid ceramidase (394 aa).

The N-terminal stretch at 1–20 is a signal peptide; that stretch reads MLGRSLLTWVLAAAVTCAQA. Residues Cys-30 and Cys-339 are joined by a disulfide bond. The Nucleophile role is filled by Cys-142. 4 N-linked (GlcNAc...) asparagine glycosylation sites follow: Asn-194, Asn-258, Asn-285, and Asn-341. Cys-387 and Cys-391 are disulfide-bonded.

The protein belongs to the acid ceramidase family. As to quaternary structure, heterodimer; disulfide-linked. The heterodimer is composed of the disulfide-linked alpha and beta chains produced by autocatalytic cleavage of the precursor. Post-translationally, N-glycosylated. In terms of processing, proteolytically cleaved into two chains alpha and beta that remain associated via a disulfide bond. Cleavage gives rise to a conformation change that activates the enzyme. The same catalytic Cys residue mediates the autoproteolytic cleavage and subsequent hydrolysis of lipid substrates. The beta chain may undergo an additional C-terminal processing.

It is found in the lysosome. The protein localises to the secreted. It catalyses the reaction an N-acylsphing-4-enine + H2O = sphing-4-enine + a fatty acid. The catalysed reaction is N-dodecanoylsphing-4-enine + H2O = dodecanoate + sphing-4-enine. The enzyme catalyses N-tetradecanoylsphing-4-enine + H2O = tetradecanoate + sphing-4-enine. It carries out the reaction N-hexadecanoylsphing-4-enine + H2O = sphing-4-enine + hexadecanoate. It catalyses the reaction N-octadecanoylsphing-4-enine + H2O = sphing-4-enine + octadecanoate. The catalysed reaction is N-dodecanoyl-(4R)-hydroxysphinganine + H2O = (4R)-hydroxysphinganine + dodecanoate. The enzyme catalyses N-(dodecanoyl)-sphinganine + H2O = dodecanoate + sphinganine. It carries out the reaction N-(acetyl)-sphing-4-enine + H2O = sphing-4-enine + acetate. It catalyses the reaction N-(hexanoyl)sphing-4-enine + H2O = hexanoate + sphing-4-enine. The catalysed reaction is N-octanoylsphing-4-enine + H2O = octanoate + sphing-4-enine. The enzyme catalyses N-(9Z-octadecenoyl)-sphing-4-enine + H2O = sphing-4-enine + (9Z)-octadecenoate. It carries out the reaction N-dodecanoylethanolamine + H2O = dodecanoate + ethanolamine. It functions in the pathway lipid metabolism; sphingolipid metabolism. In terms of biological role, lysosomal ceramidase that hydrolyzes sphingolipid ceramides into sphingosine and free fatty acids at acidic pH. Ceramides, sphingosine, and its phosphorylated form sphingosine-1-phosphate are bioactive lipids that mediate cellular signaling pathways regulating several biological processes including cell proliferation, apoptosis and differentiation. Has a higher catalytic efficiency towards C12-ceramides versus other ceramides. Also catalyzes the reverse reaction allowing the synthesis of ceramides from fatty acids and sphingosine. For the reverse synthetic reaction, the natural sphingosine D-erythro isomer is more efficiently utilized as a substrate compared to D-erythro-dihydrosphingosine and D-erythro-phytosphingosine, while the fatty acids with chain lengths of 12 or 14 carbons are the most efficiently used. Also has an N-acylethanolamine hydrolase activity. By regulating the levels of ceramides, sphingosine and sphingosine-1-phosphate in the epidermis, mediates the calcium-induced differentiation of epidermal keratinocytes. Also indirectly regulates tumor necrosis factor/TNF-induced apoptosis. By regulating the intracellular balance between ceramides and sphingosine, in adrenocortical cells, probably also acts as a regulator of steroidogenesis. The polypeptide is Acid ceramidase (Rattus norvegicus (Rat)).